A 977-amino-acid chain; its full sequence is Dynamin-like GTPase OPA1, mitochondrial (977 aa).

The transit peptide at 1–86 directs the protein to the mitochondrion; it reads MWRTKAAAAC…VKYGYQSYRN (86 aa). The Mitochondrial matrix segment spans residues 87–95; it reads FWLARLASR. Residues 96–112 form a helical membrane-spanning segment; it reads LLKIRYLILGSAVGGGY. Residues 113–787 are Mitochondrial intermembrane-facing; sequence TAKKTYDQWE…SVIEDMVGPD (675 aa). Positions 224-271 form a coiled coil; that stretch reads KKVSDKEKIDQLQEELLRTQLKYQRMLERLEKENKELRKLVLQRDDKG. One can recognise a Dynamin-type G domain in the interval 302–578; it reads QDHLPRVVVV…FWKMVRESVE (277 aa). A G1 motif region spans residues 312-319; sequence GDQSAGKT. The GTP site is built by serine 315, glycine 317, lysine 318, threonine 319, serine 320, and glycine 334. Mg(2+) is bound at residue threonine 319. The interval 338-341 is G2 motif; that stretch reads MMTR. Residues threonine 340 and aspartate 415 each coordinate Mg(2+). Residues 415–418 are G3 motif; it reads DLPG. Positions 484-487 are G4 motif; sequence TKVD. GTP-binding residues include lysine 485, aspartate 487, and threonine 520. Residues 518 to 521 are G5 motif; the sequence is VVTG. Stalk region regions lie at residues 606–853 and 891–945; these read DRNE…IKDT and CNDI…VKLL. The segment at 753-873 is paddle region; it reads SDKQQWDAAI…KTALNHCNLC (121 aa). An intramembrane segment occupies 788 to 798; it reads WKKRWLYWISR. Over 799 to 977 the chain is Mitochondrial intermembrane; sequence TKEQNIRNET…AFIEALHQEK (179 aa). Cysteine 873 and cysteine 891 are joined by a disulfide. The stretch at 911 to 977 forms a coiled coil; sequence LRQQLTNTEV…AFIEALHQEK (67 aa).

This sequence belongs to the TRAFAC class dynamin-like GTPase superfamily. Dynamin/Fzo/YdjA family. In terms of assembly, oligomeric complex consisting of membrane-bound and soluble forms of OPA1. Cleaved by OMA1 or YME1L downstream of the transmembrane region in response to different signals to generate soluble forms. Cleaved by OMA1 at position S1 following stress conditions, generating the short soluble form (Dynamin-like GTPase OPA1, short form; S-OPA1).

The protein localises to the mitochondrion inner membrane. The protein resides in the mitochondrion intermembrane space. It carries out the reaction GTP + H2O = GDP + phosphate + H(+). Dynamin-related GTPase that is essential for normal mitochondrial morphology by mediating fusion of the mitochondrial inner membranes, regulating cristae morphology and maintaining respiratory chain function. Exists in two forms: the transmembrane, long form (Dynamin-like GTPase OPA1, long form; L-OPA1), which is tethered to the inner mitochondrial membrane, and the short soluble form (Dynamin-like GTPase OPA1, short form; S-OPA1), which results from proteolytic cleavage and localizes in the intermembrane space. Both forms (L-OPA1 and S-OPA1) cooperate to catalyze the fusion of the mitochondrial inner membrane. The equilibrium between L-OPA1 and S-OPA1 is essential: excess levels of S-OPA1, produced by cleavage by OMA1 following loss of mitochondrial membrane potential, lead to an impaired equilibrium between L-OPA1 and S-OPA1, inhibiting mitochondrial fusion. The balance between L-OPA1 and S-OPA1 also influences cristae shape and morphology. Its role in mitochondrial morphology is required for mitochondrial genome maintenance. Its function is as follows. Constitutes the transmembrane long form (L-OPA1) that plays a central role in mitochondrial inner membrane fusion and cristae morphology. L-OPA1 and the soluble short form (S-OPA1) form higher-order helical assemblies that coordinate the fusion of mitochondrial inner membranes. Inner membrane-anchored L-OPA1 molecules initiate membrane remodeling by recruiting soluble S-OPA1 to rapidly polymerize into a flexible cylindrical scaffold encaging the mitochondrial inner membrane. Once at the membrane surface, the formation of S-OPA1 helices induce bilayer curvature. OPA1 dimerization through the paddle region, which inserts into cardiolipin-containing membrane, promotes GTP hydrolysis and the helical assembly of a flexible OPA1 lattice on the membrane, which drives membrane curvature and mitochondrial fusion. Plays a role in the maintenance and remodeling of mitochondrial cristae, some invaginations of the mitochondrial inner membrane that provide an increase in the surface area. Probably acts by forming helical filaments at the inside of inner membrane tubes with the shape and dimensions of crista junctions. Functionally, constitutes the soluble short form (S-OPA1) generated by cleavage by OMA1, which plays a central role in mitochondrial inner membrane fusion and cristae morphology. The transmembrane long form (L-OPA1) and the S-OPA1 form higher-order helical assemblies that coordinate the fusion of mitochondrial inner membranes. Inner membrane-anchored L-OPA1 molecules initiate membrane remodeling by recruiting soluble S-OPA1 to rapidly polymerize into a flexible cylindrical scaffold encaging the mitochondrial inner membrane. Once at the membrane surface, the formation of S-OPA1 helices induce bilayer curvature. OPA1 dimerization through the paddle region, which inserts into cardiolipin-containing membrane, promotes GTP hydrolysis and the helical assembly of a flexible OPA1 lattice on the membrane, which drives membrane curvature and mitochondrial fusion. Excess levels of S-OPA1 produced by cleavage by OMA1 following stress conditions that induce loss of mitochondrial membrane potential, lead to an impaired equilibrium between L-OPA1 and S-OPA1, thereby inhibiting mitochondrial fusion. Plays a role in the maintenance and remodeling of mitochondrial cristae, some invaginations of the mitochondrial inner membrane that provide an increase in the surface area. Probably acts by forming helical filaments at the inside of inner membrane tubes with the shape and dimensions of crista junctions. This chain is Dynamin-like GTPase OPA1, mitochondrial, found in Gallus gallus (Chicken).